The primary structure comprises 75 residues: MISAGVDSSDLAKRGESLIRQSSNRYLTTVRIAFRAKQRRFDDFDGLLEESSVKPVQRAIVELSDEQDQPDLLPG.

This sequence belongs to the RNA polymerase subunit omega family. In cyanobacteria the RNAP catalytic core is composed of 2 alpha, 1 beta, 1 beta', 1 gamma and 1 omega subunit. When a sigma factor is associated with the core the holoenzyme is formed, which can initiate transcription.

The catalysed reaction is RNA(n) + a ribonucleoside 5'-triphosphate = RNA(n+1) + diphosphate. Its function is as follows. Promotes RNA polymerase assembly. Latches the N- and C-terminal regions of the beta' subunit thereby facilitating its interaction with the beta and alpha subunits. In Parasynechococcus marenigrum (strain WH8102), this protein is DNA-directed RNA polymerase subunit omega.